An 84-amino-acid chain; its full sequence is Toxin Ts4 (84 aa).

A signal peptide spans M1–G19. Positions R21 to G82 constitute an LCN-type CS-alpha/beta domain. 4 disulfides stabilise this stretch: C31-C81, C35-C57, C43-C62, and C47-C64. C81 is subject to Cysteine amide. Positions G82–K84 are excised as a propeptide.

It belongs to the long (4 C-C) scorpion toxin superfamily. Sodium channel inhibitor family. Alpha subfamily. Expressed by the venom gland.

The protein localises to the secreted. In terms of biological role, not toxic. Induces an immune response similar to that induced by whole venom. Induces a dose dependent release of the neurotransmitters glutamic acid and gamma aminobutyric acid from rat brain synaptosomes. Thus, polyclonal antibodies raised against this protein can neutralize the effects of the venom. The polypeptide is Toxin Ts4 (Tityus serrulatus (Brazilian scorpion)).